The primary structure comprises 690 residues: Elongation factor G (690 aa).

In terms of domain architecture, tr-type G spans Glu-8–Leu-283. GTP contacts are provided by residues Ala-17 to Thr-24, Asp-81 to His-85, and Asn-135 to Asp-138.

This sequence belongs to the TRAFAC class translation factor GTPase superfamily. Classic translation factor GTPase family. EF-G/EF-2 subfamily.

Its subcellular location is the cytoplasm. In terms of biological role, catalyzes the GTP-dependent ribosomal translocation step during translation elongation. During this step, the ribosome changes from the pre-translocational (PRE) to the post-translocational (POST) state as the newly formed A-site-bound peptidyl-tRNA and P-site-bound deacylated tRNA move to the P and E sites, respectively. Catalyzes the coordinated movement of the two tRNA molecules, the mRNA and conformational changes in the ribosome. The protein is Elongation factor G of Rhizorhabdus wittichii (strain DSM 6014 / CCUG 31198 / JCM 15750 / NBRC 105917 / EY 4224 / RW1) (Sphingomonas wittichii).